The sequence spans 544 residues: Chaperonin GroEL 1 (544 aa).

ATP-binding positions include Thr29–Pro32, Asp86–Thr90, Gly413, Asn482–Leu484, and Asp498.

It belongs to the chaperonin (HSP60) family. As to quaternary structure, forms a cylinder of 14 subunits composed of two heptameric rings stacked back-to-back. Interacts with the co-chaperonin GroES.

Its subcellular location is the cytoplasm. The enzyme catalyses ATP + H2O + a folded polypeptide = ADP + phosphate + an unfolded polypeptide.. Its function is as follows. Together with its co-chaperonin GroES, plays an essential role in assisting protein folding. The GroEL-GroES system forms a nano-cage that allows encapsulation of the non-native substrate proteins and provides a physical environment optimized to promote and accelerate protein folding. The sequence is that of Chaperonin GroEL 1 from Chloroflexus aurantiacus (strain ATCC 29366 / DSM 635 / J-10-fl).